Consider the following 238-residue polypeptide: Formate dehydrogenase, cytochrome b556 subunit (238 aa).

Heme b contacts are provided by His-23 and His-62. 4 helical membrane passes run 23 to 43 (HWML…FFFP), 60 to 80 (AIHP…ALLY), 120 to 140 (MLFW…IIMW), and 155 to 175 (IAIL…LVHI). Heme b is bound by residues His-160 and His-174.

It belongs to the formate dehydrogenase gamma subunit family. As to quaternary structure, formate dehydrogenase is a membrane-bound complex, formed by subunits alpha, beta and gamma. It depends on heme as a cofactor.

The protein resides in the cell membrane. Allows to use formate as major electron donor during anaerobic respiration. Subunit gamma is probably the cytochrome b556(FDO) component of the formate dehydrogenase. The chain is Formate dehydrogenase, cytochrome b556 subunit (fdxI) from Haemophilus influenzae (strain ATCC 51907 / DSM 11121 / KW20 / Rd).